We begin with the raw amino-acid sequence, 100 residues long: MAKKSLIQREKKRQKLEQKYHLIRRSSKEEISKVRSLSDKWEIYGKLQSPPRNSAPTRLHRRCFSTGRPRANYRDFGLSGHILREMVHACLLPGATRSSW.

The protein belongs to the universal ribosomal protein uS14 family. In terms of assembly, part of the 30S ribosomal subunit.

It is found in the plastid. Its subcellular location is the chloroplast. Binds 16S rRNA, required for the assembly of 30S particles. This is Small ribosomal subunit protein uS14c from Helianthus annuus (Common sunflower).